We begin with the raw amino-acid sequence, 368 residues long: Probable pectate lyase 4 (368 aa).

The first 25 residues, 1–25 (MASLVVIVSLLLAAFASPLLETAHS), serve as a signal peptide directing secretion. Asn-27 carries an N-linked (GlcNAc...) asparagine glycan. Residues Asp-167, Asp-191, and Asp-195 each coordinate Ca(2+). The active site involves Arg-247.

The protein belongs to the polysaccharide lyase 1 family. The cofactor is Ca(2+).

The enzyme catalyses Eliminative cleavage of (1-&gt;4)-alpha-D-galacturonan to give oligosaccharides with 4-deoxy-alpha-D-galact-4-enuronosyl groups at their non-reducing ends.. Its pathway is glycan metabolism; pectin degradation; 2-dehydro-3-deoxy-D-gluconate from pectin: step 2/5. This chain is Probable pectate lyase 4, found in Arabidopsis thaliana (Mouse-ear cress).